The sequence spans 429 residues: 3-phosphoshikimate 1-carboxyvinyltransferase (429 aa).

Residues lysine 11, serine 12, and arginine 16 each contribute to the 3-phosphoshikimate site. Position 11 (lysine 11) interacts with phosphoenolpyruvate. Residues glycine 82 and arginine 110 each contribute to the phosphoenolpyruvate site. Residues serine 155, glutamine 157, aspartate 302, and lysine 329 each coordinate 3-phosphoshikimate. Glutamine 157 lines the phosphoenolpyruvate pocket. Aspartate 302 functions as the Proton acceptor in the catalytic mechanism. Phosphoenolpyruvate is bound by residues arginine 333 and arginine 385.

It belongs to the EPSP synthase family. Monomer.

It is found in the cytoplasm. The catalysed reaction is 3-phosphoshikimate + phosphoenolpyruvate = 5-O-(1-carboxyvinyl)-3-phosphoshikimate + phosphate. It functions in the pathway metabolic intermediate biosynthesis; chorismate biosynthesis; chorismate from D-erythrose 4-phosphate and phosphoenolpyruvate: step 6/7. Its function is as follows. Catalyzes the transfer of the enolpyruvyl moiety of phosphoenolpyruvate (PEP) to the 5-hydroxyl of shikimate-3-phosphate (S3P) to produce enolpyruvyl shikimate-3-phosphate and inorganic phosphate. This Helicobacter pylori (strain Shi470) protein is 3-phosphoshikimate 1-carboxyvinyltransferase.